Reading from the N-terminus, the 390-residue chain is Succinate--CoA ligase [ADP-forming] subunit beta (390 aa).

The 240-residue stretch at 9 to 248 folds into the ATP-grasp domain; that stretch reads KEILRRHKAN…ITEEDPLEVQ (240 aa). Residues lysine 50, 57-59, glutamate 103, isoleucine 106, and glutamate 111 each bind ATP; that span reads GRG. Mg(2+) is bound by residues asparagine 203 and aspartate 217. Substrate is bound by residues asparagine 268 and 325–327; that span reads GIV.

It belongs to the succinate/malate CoA ligase beta subunit family. As to quaternary structure, heterotetramer of two alpha and two beta subunits. It depends on Mg(2+) as a cofactor.

The enzyme catalyses succinate + ATP + CoA = succinyl-CoA + ADP + phosphate. It carries out the reaction GTP + succinate + CoA = succinyl-CoA + GDP + phosphate. Its pathway is carbohydrate metabolism; tricarboxylic acid cycle; succinate from succinyl-CoA (ligase route): step 1/1. In terms of biological role, succinyl-CoA synthetase functions in the citric acid cycle (TCA), coupling the hydrolysis of succinyl-CoA to the synthesis of either ATP or GTP and thus represents the only step of substrate-level phosphorylation in the TCA. The beta subunit provides nucleotide specificity of the enzyme and binds the substrate succinate, while the binding sites for coenzyme A and phosphate are found in the alpha subunit. The sequence is that of Succinate--CoA ligase [ADP-forming] subunit beta from Leptospira interrogans serogroup Icterohaemorrhagiae serovar copenhageni (strain Fiocruz L1-130).